Here is a 139-residue protein sequence, read N- to C-terminus: Large ribosomal subunit protein mL54 (139 aa).

Residues 1–50 constitute a mitochondrion transit peptide; it reads MPFIESMAPLSRAITRGISQFSCYSNTLVLRSSRNSSSSLVKRSYVSSRV. Over residues 35 to 50 the composition is skewed to low complexity; sequence NSSSSLVKRSYVSSRV. Residues 35 to 74 are disordered; the sequence is NSSSSLVKRSYVSSRVSPKKPQHNSDATSSAQKVANKTHT. Residues 58-74 show a composition bias toward polar residues; that stretch reads NSDATSSAQKVANKTHT.

This sequence belongs to the mitochondrion-specific ribosomal protein mL54 family. In terms of assembly, component of the mitochondrial large ribosomal subunit (mt-LSU). Mature yeast 74S mitochondrial ribosomes consist of a small (37S) and a large (54S) subunit. The 37S small subunit contains a 15S ribosomal RNA (15S mt-rRNA) and at least 32 different proteins. The 54S large subunit contains a 21S rRNA (21S mt-rRNA) and at least 45 different proteins.

Its subcellular location is the mitochondrion. Component of the mitochondrial ribosome (mitoribosome), a dedicated translation machinery responsible for the synthesis of mitochondrial genome-encoded proteins, including at least some of the essential transmembrane subunits of the mitochondrial respiratory chain. The mitoribosomes are attached to the mitochondrial inner membrane and translation products are cotranslationally integrated into the membrane. mL54 may have a meiosis-specific role as it accumulates during the middle stage of sporulation. The sequence is that of Large ribosomal subunit protein mL54 (mrpl37) from Schizosaccharomyces pombe (strain 972 / ATCC 24843) (Fission yeast).